The sequence spans 159 residues: Small ribosomal subunit protein uS17 (159 aa).

The protein belongs to the universal ribosomal protein uS17 family.

The protein localises to the cytoplasm. The protein is Small ribosomal subunit protein uS17 (RPS11) of Zea mays (Maize).